Here is a 124-residue protein sequence, read N- to C-terminus: Magnetosome protein MamC (124 aa).

The Cytoplasmic segment spans residues 2–8 (PFHLAPY). The chain crosses the membrane as a helical span at residues 9-29 (LAKSVPGVGVLGALVGGAAAL). The Lumenal portion of the chain corresponds to 30-64 (AKNVRLLKEKRITNTEAAIDTGKETVGAGLATALS). Residues 36 to 56 (LKEKRITNTEAAIDTGKETVG) are MIC, when fused with the C-terminus of maltose-binding protein (MBP) or expressed as a fragment, improves quality of iron particles during precipitation experiments, binds magnetite. A helical transmembrane segment spans residues 65–85 (AVAATAVGGGLVVSLGTALVA). Topologically, residues 86–124 (GVAAKYAWDRGVDLVEKELNRGKAANGASDEDILRDELA) are cytoplasmic.

This sequence belongs to the magnetosome MamC family. Probably interacts with MamA.

The protein resides in the magnetosome membrane. In terms of biological role, probably involved in magnetite crystal growth. The lumenal domain may bind the magnetite crystals, affecting crystal size and shape. The chain is Magnetosome protein MamC from Paramagnetospirillum magneticum (strain ATCC 700264 / AMB-1) (Magnetospirillum magneticum).